The following is a 349-amino-acid chain: Rhodopsin (349 aa).

Residues 1–33 (TEGPYFYIPMSNATGVVRSPYEYPQYYLVYPAA) lie on the Extracellular side of the membrane. N-linked (GlcNAc...) asparagine glycosylation is present at asparagine 12. The chain crosses the membrane as a helical span at residues 34–58 (FAVLGAYMFFLIIFGFPVNFLTLYV). The Cytoplasmic segment spans residues 59–70 (TIEHKKLRTPLN). Residues 71–93 (YILLNLAVADLFMVIGGFTTTIY) form a helical membrane-spanning segment. The Extracellular segment spans residues 94–107 (TSMHGYFVLGRLGC). Cysteine 107 and cysteine 184 are oxidised to a cystine. A helical membrane pass occupies residues 108–130 (NLEGFSATLGGMISLWSLVVLAV). The short motif at 131 to 133 (ERW) is the 'Ionic lock' involved in activated form stabilization element. The Cytoplasmic segment spans residues 131-149 (ERWVVVCKPMSNFRFGENH). The helical transmembrane segment at 150-170 (AIMGVTLTWAMGLACTVPPLV) threads the bilayer. Residues 171–199 (GWSRYIPEGMQCSCGIDYYTRAEGFNNES) are Extracellular-facing. The N-linked (GlcNAc...) asparagine glycan is linked to asparagine 197. Residues 200 to 221 (FVLYMFVCHFSFPLVVIFFCYG) form a helical membrane-spanning segment. At 222 to 249 (RLLCAVKEAAAAQQESETTQRAEREVTR) the chain is on the cytoplasmic side. Residues 250-271 (MVILMVIGFLVCWLPYASVAWY) form a helical membrane-spanning segment. At 272–283 (IFTHQGSEFGPL) the chain is on the extracellular side. A helical membrane pass occupies residues 284-305 (FMTIPAFFAKSSAIYNPVIYIC). Residue lysine 293 is modified to N6-(retinylidene)lysine. At 306–349 (LNKQFRQCMLTTLFCGKNPFEEEEGASSTKTEASSASSSSVSPA) the chain is on the cytoplasmic side. A lipid anchor (S-palmitoyl cysteine) is attached at cysteine 320. Residues 326-349 (EEEEGASSTKTEASSASSSSVSPA) are disordered. The span at 331-349 (ASSTKTEASSASSSSVSPA) shows a compositional bias: low complexity.

The protein belongs to the G-protein coupled receptor 1 family. Opsin subfamily. Post-translationally, phosphorylated on some or all of the serine and threonine residues present in the C-terminal region. Contains one covalently linked retinal chromophore.

The protein resides in the membrane. Its subcellular location is the cell projection. It localises to the cilium. The protein localises to the photoreceptor outer segment. In terms of biological role, photoreceptor required for image-forming vision at low light intensity. While most salt water fish species use retinal as chromophore, most freshwater fish use 3-dehydroretinal, or a mixture of retinal and 3-dehydroretinal. Light-induced isomerization of 11-cis to all-trans retinal triggers a conformational change that activates signaling via G-proteins. Subsequent receptor phosphorylation mediates displacement of the bound G-protein alpha subunit by arrestin and terminates signaling. In Myripristis berndti (Bigscale soldierfish), this protein is Rhodopsin (rho).